Reading from the N-terminus, the 455-residue chain is Putative FBD-associated F-box protein At5g56400 (455 aa).

In terms of domain architecture, F-box spans 32 to 81 (VDKISDLPEDLLVHILSLLPTTNDIVATSGVSKRWESLWTKVHKLRFNDR). An FBD domain is found at 372 to 421 (WNQQPSYVPECLTKSLEIFEWRNYKATFRERDVAVYILKNSTCLKKTVIS).

This chain is Putative FBD-associated F-box protein At5g56400, found in Arabidopsis thaliana (Mouse-ear cress).